The chain runs to 342 residues: Ribosomal RNA small subunit methyltransferase C (342 aa).

This sequence belongs to the methyltransferase superfamily. RsmC family. As to quaternary structure, monomer.

Its subcellular location is the cytoplasm. The enzyme catalyses guanosine(1207) in 16S rRNA + S-adenosyl-L-methionine = N(2)-methylguanosine(1207) in 16S rRNA + S-adenosyl-L-homocysteine + H(+). In terms of biological role, specifically methylates the guanine in position 1207 of 16S rRNA in the 30S particle. This chain is Ribosomal RNA small subunit methyltransferase C, found in Erwinia tasmaniensis (strain DSM 17950 / CFBP 7177 / CIP 109463 / NCPPB 4357 / Et1/99).